The sequence spans 239 residues: Caffeoyl-CoA O-methyltransferase 1 (239 aa).

A substrate-binding site is contributed by K13. S-adenosyl-L-methionine is bound by residues T55, E77, G79–V80, S85, D103, and A132. D155 contacts substrate. D155 serves as a coordination point for a divalent metal cation. Position 157 (D157) interacts with S-adenosyl-L-methionine. A divalent metal cation contacts are provided by D181 and N182. N186 is a binding site for substrate.

Belongs to the class I-like SAM-binding methyltransferase superfamily. Cation-dependent O-methyltransferase family. CCoAMT subfamily. As to quaternary structure, monomer. Requires Mg(2+) as cofactor. In terms of tissue distribution, mostly expressed in the bottom and middle parts of the stems.

The enzyme catalyses (E)-caffeoyl-CoA + S-adenosyl-L-methionine = (E)-feruloyl-CoA + S-adenosyl-L-homocysteine + H(+). Its pathway is aromatic compound metabolism; phenylpropanoid biosynthesis. Functionally, methylates caffeoyl-CoA to feruloyl-CoA and 5-hydroxyferuloyl-CoA to sinapoyl-CoA. Plays a role in the synthesis of feruloylated polysaccharides. Involved in the reinforcement of the plant cell wall. Also involved in the responding to wounding or pathogen challenge by the increased formation of cell wall-bound ferulic acid polymers. The chain is Caffeoyl-CoA O-methyltransferase 1 (CCOAOMT1) from Nicotiana tabacum (Common tobacco).